The following is a 199-amino-acid chain: 5'-deoxynucleotidase YfbR (199 aa).

Substrate is bound by residues 18–19 and H33; that span reads RW. Positions 30 to 142 constitute an HD domain; the sequence is VSEHSLQVAM…VKQADALCAY (113 aa). A divalent metal cation contacts are provided by H33, H68, and D69. Substrate contacts are provided by residues D69, 77 to 80, and D137; that span reads DLPT. D137 serves as a coordination point for a divalent metal cation.

This sequence belongs to the 5DNU family. As to quaternary structure, homodimer. A divalent metal cation is required as a cofactor.

The protein resides in the cytoplasm. It catalyses the reaction a 2'-deoxyribonucleoside 5'-phosphate + H2O = a 2'-deoxyribonucleoside + phosphate. Its function is as follows. Catalyzes the strictly specific dephosphorylation of 2'-deoxyribonucleoside 5'-monophosphates. In Salmonella agona (strain SL483), this protein is 5'-deoxynucleotidase YfbR.